Consider the following 176-residue polypeptide: MLRFLNQCSQGRGAWLLMAFTALALELTALWFQHVMLLKPCVLCIYERCALFGVLGAALIGAIAPKTPLRYVAMVIWLYSAFRGVQLTYEHTMLQLYPSPFATCDFMVRFPEWLPLDKWVPQVFVASGDCAERQWDFLGMEMPQWLLGIFIAYLIVAVLVVISQPFKAKKRDLFGR.

At 1–14 the chain is on the cytoplasmic side; sequence MLRFLNQCSQGRGA. A helical transmembrane segment spans residues 15–31; the sequence is WLLMAFTALALELTALW. Residues 32–49 are Periplasmic-facing; that stretch reads FQHVMLLKPCVLCIYERC. Cys41 and Cys44 are oxidised to a cystine. The chain crosses the membrane as a helical span at residues 50 to 65; the sequence is ALFGVLGAALIGAIAP. At 66–71 the chain is on the cytoplasmic side; sequence KTPLRY. Residues 72–89 form a helical membrane-spanning segment; that stretch reads VAMVIWLYSAFRGVQLTY. Residues 90–144 are Periplasmic-facing; it reads EHTMLQLYPSPFATCDFMVRFPEWLPLDKWVPQVFVASGDCAERQWDFLGMEMPQ. A disulfide bridge links Cys104 with Cys130. A helical transmembrane segment spans residues 145-163; that stretch reads WLLGIFIAYLIVAVLVVIS. Topologically, residues 164–176 are cytoplasmic; that stretch reads QPFKAKKRDLFGR.

Belongs to the DsbB family.

It is found in the cell inner membrane. In terms of biological role, required for disulfide bond formation in some periplasmic proteins such as PhoA or OmpA. Acts by oxidizing the DsbA protein. This chain is Disulfide bond formation protein B, found in Shigella flexneri.